We begin with the raw amino-acid sequence, 418 residues long: Light-independent protochlorophyllide reductase subunit N (418 aa).

Residues Cys-17, Cys-42, and Cys-103 each contribute to the [4Fe-4S] cluster site.

This sequence belongs to the BchN/ChlN family. As to quaternary structure, protochlorophyllide reductase is composed of three subunits; ChlL, ChlN and ChlB. Forms a heterotetramer of two ChlB and two ChlN subunits. Requires [4Fe-4S] cluster as cofactor.

It carries out the reaction chlorophyllide a + oxidized 2[4Fe-4S]-[ferredoxin] + 2 ADP + 2 phosphate = protochlorophyllide a + reduced 2[4Fe-4S]-[ferredoxin] + 2 ATP + 2 H2O. It functions in the pathway porphyrin-containing compound metabolism; chlorophyll biosynthesis (light-independent). Its function is as follows. Component of the dark-operative protochlorophyllide reductase (DPOR) that uses Mg-ATP and reduced ferredoxin to reduce ring D of protochlorophyllide (Pchlide) to form chlorophyllide a (Chlide). This reaction is light-independent. The NB-protein (ChlN-ChlB) is the catalytic component of the complex. This Prochlorococcus marinus (strain AS9601) protein is Light-independent protochlorophyllide reductase subunit N.